The following is a 158-amino-acid chain: 2-C-methyl-D-erythritol 2,4-cyclodiphosphate synthase (158 aa).

Positions 9 and 11 each coordinate a divalent metal cation. Residues 9-11 (DVH) and 35-36 (HS) contribute to the 4-CDP-2-C-methyl-D-erythritol 2-phosphate site. His43 is a binding site for a divalent metal cation. 4-CDP-2-C-methyl-D-erythritol 2-phosphate is bound by residues 57–59 (DIG), 62–66 (FPDTD), 133–136 (TTTE), Phe140, and Arg143.

This sequence belongs to the IspF family. In terms of assembly, homotrimer. It depends on a divalent metal cation as a cofactor.

It carries out the reaction 4-CDP-2-C-methyl-D-erythritol 2-phosphate = 2-C-methyl-D-erythritol 2,4-cyclic diphosphate + CMP. It participates in isoprenoid biosynthesis; isopentenyl diphosphate biosynthesis via DXP pathway; isopentenyl diphosphate from 1-deoxy-D-xylulose 5-phosphate: step 4/6. Its function is as follows. Involved in the biosynthesis of isopentenyl diphosphate (IPP) and dimethylallyl diphosphate (DMAPP), two major building blocks of isoprenoid compounds. Catalyzes the conversion of 4-diphosphocytidyl-2-C-methyl-D-erythritol 2-phosphate (CDP-ME2P) to 2-C-methyl-D-erythritol 2,4-cyclodiphosphate (ME-CPP) with a corresponding release of cytidine 5-monophosphate (CMP). The sequence is that of 2-C-methyl-D-erythritol 2,4-cyclodiphosphate synthase from Haemophilus influenzae (strain PittGG).